A 227-amino-acid chain; its full sequence is Cytidylate kinase (227 aa).

12–20 (GPSGAGKGT) contributes to the ATP binding site.

The protein belongs to the cytidylate kinase family. Type 1 subfamily.

The protein localises to the cytoplasm. It catalyses the reaction CMP + ATP = CDP + ADP. The catalysed reaction is dCMP + ATP = dCDP + ADP. The polypeptide is Cytidylate kinase (Salmonella typhimurium (strain LT2 / SGSC1412 / ATCC 700720)).